The chain runs to 549 residues: MPSQDDVQNLPIDITFSRLGEWLVDRKRIPADWRKRVAVIRVKILKEFSSLPKEIDPFFQTLDPEVIGYLEVKKVYEILLKTTPESRNIFGRLSGASGVWEAIVRAFEKDHIYLGEAAQIIIQNVNYEIPYLKKQVQKVQQQMTELDRKEADIKRSVALSATKYEDACRELGLQGNNVRRELLETASSLPSTFSKILEVINSDSVTGAMEYYSAYVQDVHTEKDKPLRIVLQNLKYIRENPPSLSVFGDSEGLDADNIQSSENANGTDAAADSIDWDITVETPEIDWDVSMVEEVDSGNDLGSYEIVNASDIPENSPFKVEESQGLEVDVSEISWDVSVETPQVEEIGDSALLESNQTQLTDSTTQVLGSGGERSQLLETEYRNKILDDLYEVKAFLNQRLIELRNEDTLSLQHHVQAVSPMVLQQYSPETIEPMVVDISMAISLLTNKKSRDLIMILNSKRFLDRLVSELEEKKHREVKLRESLKDVGRRRMELQNSLSAIWPKQEAALSKTRELKELCETSLSSMFDGRPVNIRGEINTLLNAGVSA.

Short sequence motifs (shuffled ATG8-binding motif) lie at residues 274-277 (IDWD), 285-288 (IDWD), and 333-336 (ISWD).

The protein belongs to the CDK5RAP3 family. As to quaternary structure, substrate adapter component of the UFM1 ribosome E3 ligase (UREL) complex. Interacts with ATG8 family proteins.

Its function is as follows. Substrate adapter of E3 ligase complexes mediating ufmylation, the covalent attachment of the ubiquitin-like modifier UFM1 to substrate proteins, and which is involved in various processes, such as ribosome recycling and reticulophagy (also called ER-phagy). This is CDK5RAP3 protein homolog from Arabidopsis thaliana (Mouse-ear cress).